We begin with the raw amino-acid sequence, 262 residues long: Triosephosphate isomerase (262 aa).

Residue 13–15 coordinates substrate; that stretch reads NWK. Catalysis depends on His103, which acts as the Electrophile. Glu175 functions as the Proton acceptor in the catalytic mechanism. Substrate-binding positions include Gly181, Ser221, and 242-243; that span reads GG.

This sequence belongs to the triosephosphate isomerase family. In terms of assembly, homodimer.

The protein resides in the cytoplasm. It catalyses the reaction D-glyceraldehyde 3-phosphate = dihydroxyacetone phosphate. It participates in carbohydrate biosynthesis; gluconeogenesis. Its pathway is carbohydrate degradation; glycolysis; D-glyceraldehyde 3-phosphate from glycerone phosphate: step 1/1. Its function is as follows. Involved in the gluconeogenesis. Catalyzes stereospecifically the conversion of dihydroxyacetone phosphate (DHAP) to D-glyceraldehyde-3-phosphate (G3P). The protein is Triosephosphate isomerase of Corynebacterium efficiens (strain DSM 44549 / YS-314 / AJ 12310 / JCM 11189 / NBRC 100395).